The chain runs to 479 residues: UDP-N-acetylmuramate--L-alanine ligase (479 aa).

Residue 128–134 (GAHGKTT) participates in ATP binding.

This sequence belongs to the MurCDEF family.

Its subcellular location is the cytoplasm. It carries out the reaction UDP-N-acetyl-alpha-D-muramate + L-alanine + ATP = UDP-N-acetyl-alpha-D-muramoyl-L-alanine + ADP + phosphate + H(+). The protein operates within cell wall biogenesis; peptidoglycan biosynthesis. Functionally, cell wall formation. This Psychrobacter cryohalolentis (strain ATCC BAA-1226 / DSM 17306 / VKM B-2378 / K5) protein is UDP-N-acetylmuramate--L-alanine ligase.